The sequence spans 331 residues: Retinol dehydrogenase 13 (331 aa).

Ser2 is modified (N-acetylserine). Residue 45-51 (GANTGIG) coordinates NADP(+). Position 174 (Ser174) interacts with substrate. Residue Tyr200 is the Proton acceptor of the active site. At Ser323 the chain carries Phosphoserine.

It belongs to the short-chain dehydrogenases/reductases (SDR) family. In terms of tissue distribution, widely expressed. In the retina, detected in the inner segment of the photoreceptor cells. Weak signals are observed in a small population of inner nuclear neurons and the inner plexiform layer.

The protein localises to the mitochondrion inner membrane. It carries out the reaction all-trans-retinol + NADP(+) = all-trans-retinal + NADPH + H(+). Its pathway is cofactor metabolism; retinol metabolism. Its function is as follows. Retinol dehydrogenase with a clear preference for NADP. Oxidizes all-trans-retinol, but seems to reduce all-trans-retinal with much higher efficiency. Has no activity toward steroids. The polypeptide is Retinol dehydrogenase 13 (RDH13) (Homo sapiens (Human)).